The sequence spans 940 residues: AP-2 complex subunit alpha (940 aa).

Residues S632 and S634 each carry the phosphoserine modification. Positions 651-662 (SHSKLNNSNANT) are enriched in polar residues. The tract at residues 651-679 (SHSKLNNSNANTDLLGLSTPPSNNIGSGS) is disordered. Low complexity predominate over residues 668–679 (STPPSNNIGSGS).

The protein belongs to the adaptor complexes large subunit family. As to quaternary structure, adaptor protein complex 2 (AP-2) is a heterotetramer composed of two large adaptins (alpha-type and beta-type subunits), a medium adaptin (mu-type subunit AP50) and a small adaptin (sigma-type subunit AP17). As to expression, expressed in the Garland cells, imaginal disks, adult midgut precursors, the antenno-maxillary complex, the endoderm, the fat bodies, and the visceral mesoderm and cells of the CNS and PNS including neuroblasts, the presumptive stomatogastric nervous system, and the lateral chordotonal sense organs.

Its subcellular location is the cell membrane. It localises to the membrane. The protein resides in the coated pit. In terms of biological role, adaptins are components of the adapter complexes which link clathrin to receptors in coated vesicles. Clathrin-associated protein complexes are believed to interact with the cytoplasmic tails of membrane proteins, leading to their selection and concentration. AP-2alpha is a subunit of the plasma membrane adapter. This Drosophila melanogaster (Fruit fly) protein is AP-2 complex subunit alpha (AP-2alpha).